A 1451-amino-acid chain; its full sequence is Murinoglobulin-2 (1451 aa).

The signal sequence occupies residues 1–27 (MWKSRRAQLCLFSVLLAFLPSASSLNG). Disulfide bonds link Cys-48–Cys-86, Cys-251–Cys-276, and Cys-269–Cys-288. N-linked (GlcNAc...) asparagine glycosylation is present at Asn-55. Asn-294, Asn-313, and Asn-500 each carry an N-linked (GlcNAc...) asparagine glycan. Cystine bridges form between Cys-461–Cys-555, Cys-587–Cys-773, and Cys-634–Cys-680. Residues 677-734 (PKICFDSAPMSGPRGKFDLAFSSEVSGTLQKGSSKRPQPEEPPREDPPPKDPLAETIR) are bait region. The tract at residues 703-728 (GTLQKGSSKRPQPEEPPREDPPPKDP) is disordered. The segment covering 713 to 728 (PQPEEPPREDPPPKDP) has biased composition (basic and acidic residues). N-linked (GlcNAc...) asparagine glycans are attached at residues Asn-749, Asn-776, and Asn-871. Intrachain disulfides connect Cys-849–Cys-885, Cys-923–Cys-1274, Cys-1081–Cys-1104, and Cys-1298–Cys-1444. The isoglutamyl cysteine thioester (Cys-Gln) cross-link spans 974–977 (CGEQ). Residue Asn-1401 is glycosylated (N-linked (GlcNAc...) asparagine).

Belongs to the protease inhibitor I39 (alpha-2-macroglobulin) family. As to quaternary structure, monomer. In terms of tissue distribution, plasma.

It localises to the secreted. Its function is as follows. A proteinase activates the inhibitor by specific proteolysis in the bait region, which, by an unknown mechanism leads to reaction at the cysteinyl-glutamyl internal thiol ester site and to a conformational change, whereby the proteinase is trapped and/or covalently bound to the inhibitor. While in the tetrameric proteinase inhibitors steric inhibition is sufficiently strong, monomeric forms need a covalent linkage between the activated glutamyl residue of the original thiol ester and a terminal amino group of a lysine or another nucleophilic group on the proteinase, for inhibition to be effective. The protein is Murinoglobulin-2 (Mug2) of Mus musculus (Mouse).